Reading from the N-terminus, the 211-residue chain is N-(5'-phosphoribosyl)anthranilate isomerase (211 aa).

This sequence belongs to the TrpF family.

The catalysed reaction is N-(5-phospho-beta-D-ribosyl)anthranilate = 1-(2-carboxyphenylamino)-1-deoxy-D-ribulose 5-phosphate. Its pathway is amino-acid biosynthesis; L-tryptophan biosynthesis; L-tryptophan from chorismate: step 3/5. This Methanococcus maripaludis (strain C6 / ATCC BAA-1332) protein is N-(5'-phosphoribosyl)anthranilate isomerase.